A 195-amino-acid polypeptide reads, in one-letter code: Transmembrane protein 239 (195 aa).

The next 2 helical transmembrane spans lie at 105–125 (LWGLEGILYLLLALMLCHALF) and 145–171 (HLLPALLLLVLSALPALLFTASFLLLF).

It is found in the membrane. This Homo sapiens (Human) protein is Transmembrane protein 239 (TMEM239).